The sequence spans 201 residues: 3-isopropylmalate dehydratase small subunit (201 aa).

The protein belongs to the LeuD family. LeuD type 1 subfamily. In terms of assembly, heterodimer of LeuC and LeuD.

The enzyme catalyses (2R,3S)-3-isopropylmalate = (2S)-2-isopropylmalate. It participates in amino-acid biosynthesis; L-leucine biosynthesis; L-leucine from 3-methyl-2-oxobutanoate: step 2/4. In terms of biological role, catalyzes the isomerization between 2-isopropylmalate and 3-isopropylmalate, via the formation of 2-isopropylmaleate. The chain is 3-isopropylmalate dehydratase small subunit from Rhodopseudomonas palustris (strain ATCC BAA-98 / CGA009).